The primary structure comprises 131 residues: D-ribose pyranase (131 aa).

The active-site Proton donor is the H20. Substrate-binding positions include D28, H98, and 120–122; that span reads FSN.

The protein belongs to the RbsD / FucU family. RbsD subfamily. Homodecamer.

The protein resides in the cytoplasm. The enzyme catalyses beta-D-ribopyranose = beta-D-ribofuranose. It participates in carbohydrate metabolism; D-ribose degradation; D-ribose 5-phosphate from beta-D-ribopyranose: step 1/2. Catalyzes the interconversion of beta-pyran and beta-furan forms of D-ribose. This Levilactobacillus brevis (strain ATCC 367 / BCRC 12310 / CIP 105137 / JCM 1170 / LMG 11437 / NCIMB 947 / NCTC 947) (Lactobacillus brevis) protein is D-ribose pyranase.